The following is a 286-amino-acid chain: 4-diphosphocytidyl-2-C-methyl-D-erythritol kinase (286 aa).

Residue lysine 11 is part of the active site. 93–103 (PFGAGLGGGSS) contributes to the ATP binding site. The active site involves aspartate 135.

The protein belongs to the GHMP kinase family. IspE subfamily.

It carries out the reaction 4-CDP-2-C-methyl-D-erythritol + ATP = 4-CDP-2-C-methyl-D-erythritol 2-phosphate + ADP + H(+). It participates in isoprenoid biosynthesis; isopentenyl diphosphate biosynthesis via DXP pathway; isopentenyl diphosphate from 1-deoxy-D-xylulose 5-phosphate: step 3/6. In terms of biological role, catalyzes the phosphorylation of the position 2 hydroxy group of 4-diphosphocytidyl-2C-methyl-D-erythritol. The sequence is that of 4-diphosphocytidyl-2-C-methyl-D-erythritol kinase from Chlorobaculum parvum (strain DSM 263 / NCIMB 8327) (Chlorobium vibrioforme subsp. thiosulfatophilum).